The primary structure comprises 728 residues: Catalase-peroxidase (728 aa).

Residues 1–26 (MDNPTDTAGKCPVAHGNKPRGPSNRD) are disordered. Positions 96–218 (WHSAGTYRIT…LGAVQMGLIY (123 aa)) form a cross-link, tryptophyl-tyrosyl-methioninium (Trp-Tyr) (with M-244). Histidine 97 (proton acceptor) is an active-site residue. Positions 218 to 244 (YVNPEGPGGNPDPLASARDIRETFARM) form a cross-link, tryptophyl-tyrosyl-methioninium (Tyr-Met) (with W-96). Residue histidine 259 coordinates heme b.

This sequence belongs to the peroxidase family. Peroxidase/catalase subfamily. Homodimer or homotetramer. It depends on heme b as a cofactor. Formation of the three residue Trp-Tyr-Met cross-link is important for the catalase, but not the peroxidase activity of the enzyme.

The enzyme catalyses H2O2 + AH2 = A + 2 H2O. The catalysed reaction is 2 H2O2 = O2 + 2 H2O. Its function is as follows. Bifunctional enzyme with both catalase and broad-spectrum peroxidase activity. The polypeptide is Catalase-peroxidase (Rhizobium etli (strain CIAT 652)).